Here is a 225-residue protein sequence, read N- to C-terminus: Endonuclease V (225 aa).

2 residues coordinate Mg(2+): Asp43 and Asp110. Interaction with target DNA regions lie at residues 139-141 (KSR) and 214-221 (HIYTQRLK).

This sequence belongs to the endonuclease V family. The cofactor is Mg(2+).

The protein resides in the cytoplasm. It catalyses the reaction Endonucleolytic cleavage at apurinic or apyrimidinic sites to products with a 5'-phosphate.. Functionally, DNA repair enzyme involved in the repair of deaminated bases. Selectively cleaves double-stranded DNA at the second phosphodiester bond 3' to a deoxyinosine leaving behind the intact lesion on the nicked DNA. In vitro, can also cleave single-stranded substrates with inosine, double-stranded DNA with apurinic sites, or DNA sites with uracil or a mismatched base. When present in molar excess, two protein molecules can bind to the same DNA substrate and effect cleavage of both strands (in vitro). The chain is Endonuclease V from Thermotoga maritima (strain ATCC 43589 / DSM 3109 / JCM 10099 / NBRC 100826 / MSB8).